The sequence spans 222 residues: Glutathione S-transferase alpha-4 (222 aa).

The residue at position 1 (M1) is an N-acetylmethionine. The 81-residue stretch at 3–83 folds into the GST N-terminal domain; the sequence is VKPKLYYFQG…YLAAKYNLYG (81 aa). Glutathione is bound by residues Y9, 54–55, and 67–68; these read QV and QT. Residues 85 to 208 enclose the GST C-terminal domain; it reads DLKERVRIDM…QPGSQRKPPP (124 aa).

The protein belongs to the GST superfamily. Alpha family. In terms of assembly, homodimer.

Its subcellular location is the cytoplasm. It carries out the reaction RX + glutathione = an S-substituted glutathione + a halide anion + H(+). Its function is as follows. Conjugation of reduced glutathione to a wide number of exogenous and endogenous hydrophobic electrophiles. In Rattus norvegicus (Rat), this protein is Glutathione S-transferase alpha-4 (Gsta4).